Reading from the N-terminus, the 121-residue chain is Cell division protein FtsB (121 aa).

Residues 1–6 are Cytoplasmic-facing; that stretch reads MRNWRW. Residues 7–24 traverse the membrane as a helical segment; the sequence is LLLVLAVLLAWLQYRFWF. At 25 to 121 the chain is on the periplasmic side; the sequence is GPGNSGEVMM…PEPIDPVDHP (97 aa). Residues 31 to 66 adopt a coiled-coil conformation; that stretch reads EVMMLEAQVAHQTQDNEGLRQRNQALAAEVKDLKDG. The segment at 92–121 is disordered; it reads EDAPLPAPASPEAPAPPQQAPEPIDPVDHP. Positions 96–115 are enriched in pro residues; sequence LPAPASPEAPAPPQQAPEPI.

Belongs to the FtsB family. As to quaternary structure, part of a complex composed of FtsB, FtsL and FtsQ.

It localises to the cell inner membrane. Functionally, essential cell division protein. May link together the upstream cell division proteins, which are predominantly cytoplasmic, with the downstream cell division proteins, which are predominantly periplasmic. The polypeptide is Cell division protein FtsB (Xanthomonas euvesicatoria pv. vesicatoria (strain 85-10) (Xanthomonas campestris pv. vesicatoria)).